The following is a 250-amino-acid chain: Methionine aminopeptidase (250 aa).

Substrate is bound at residue histidine 77. Aspartate 95, aspartate 106, and histidine 169 together coordinate a divalent metal cation. Histidine 176 provides a ligand contact to substrate. A divalent metal cation is bound by residues glutamate 202 and glutamate 233.

This sequence belongs to the peptidase M24A family. Methionine aminopeptidase type 1 subfamily. In terms of assembly, monomer. Co(2+) serves as cofactor. It depends on Zn(2+) as a cofactor. The cofactor is Mn(2+). Fe(2+) is required as a cofactor.

The enzyme catalyses Release of N-terminal amino acids, preferentially methionine, from peptides and arylamides.. Its function is as follows. Removes the N-terminal methionine from nascent proteins. The N-terminal methionine is often cleaved when the second residue in the primary sequence is small and uncharged (Met-Ala-, Cys, Gly, Pro, Ser, Thr, or Val). Requires deformylation of the N(alpha)-formylated initiator methionine before it can be hydrolyzed. The protein is Methionine aminopeptidase of Clostridium acetobutylicum (strain ATCC 824 / DSM 792 / JCM 1419 / IAM 19013 / LMG 5710 / NBRC 13948 / NRRL B-527 / VKM B-1787 / 2291 / W).